Consider the following 207-residue polypeptide: Uridine kinase (207 aa).

An ATP-binding site is contributed by 13–20 (GASGSGKT).

Belongs to the uridine kinase family.

It is found in the cytoplasm. It carries out the reaction uridine + ATP = UMP + ADP + H(+). The catalysed reaction is cytidine + ATP = CMP + ADP + H(+). Its pathway is pyrimidine metabolism; CTP biosynthesis via salvage pathway; CTP from cytidine: step 1/3. It participates in pyrimidine metabolism; UMP biosynthesis via salvage pathway; UMP from uridine: step 1/1. The chain is Uridine kinase from Ureaplasma urealyticum serovar 10 (strain ATCC 33699 / Western).